The chain runs to 168 residues: 3-isopropylmalate dehydratase small subunit (168 aa).

This sequence belongs to the LeuD family. LeuD type 2 subfamily. In terms of assembly, heterodimer of LeuC and LeuD.

The catalysed reaction is (2R,3S)-3-isopropylmalate = (2S)-2-isopropylmalate. The protein operates within amino-acid biosynthesis; L-leucine biosynthesis; L-leucine from 3-methyl-2-oxobutanoate: step 2/4. In terms of biological role, catalyzes the isomerization between 2-isopropylmalate and 3-isopropylmalate, via the formation of 2-isopropylmaleate. This chain is 3-isopropylmalate dehydratase small subunit, found in Thermodesulfovibrio yellowstonii (strain ATCC 51303 / DSM 11347 / YP87).